The primary structure comprises 354 residues: Arginase (354 aa).

Mn(2+)-binding residues include H136, D159, H161, and D163. Residues N165, S172, and D217 each coordinate L-arginine. Positions 266 and 268 each coordinate Mn(2+).

It belongs to the arginase family. As to quaternary structure, homotrimer; oligomerization is dependent on Mn(2+) binding. The cofactor is Mn(2+).

It catalyses the reaction L-arginine + H2O = urea + L-ornithine. It functions in the pathway nitrogen metabolism; urea cycle; L-ornithine and urea from L-arginine: step 1/1. Its function is as follows. Catalyzes the hydrolysis of L-arginine into urea and L-ornithine, which is a precursor for polyamine biosynthesis. May play a role in parasite intra-hepatic development during the host liver stage. This Plasmodium berghei (strain Anka) protein is Arginase.